A 98-amino-acid chain; its full sequence is uncharacterized protein (98 aa).

Residues 19–31 (RRMSKRSKNKAKK) are compositionally biased toward basic residues. The interval 19 to 47 (RRMSKRSKNKAKKERVPVEDRPPTPMPTS) is disordered.

This sequence belongs to the lymphocryptovirus BNLF2b family.

This is an uncharacterized protein from Homo sapiens (Human).